Consider the following 122-residue polypeptide: Large ribosomal subunit protein uL24 (122 aa).

A disordered region spans residues 43–64 (IRKHHRRDMPTPQGGTTKGGII).

It belongs to the universal ribosomal protein uL24 family. As to quaternary structure, part of the 50S ribosomal subunit.

In terms of biological role, one of two assembly initiator proteins, it binds directly to the 5'-end of the 23S rRNA, where it nucleates assembly of the 50S subunit. Its function is as follows. One of the proteins that surrounds the polypeptide exit tunnel on the outside of the subunit. The protein is Large ribosomal subunit protein uL24 of Cutibacterium acnes (strain DSM 16379 / KPA171202) (Propionibacterium acnes).